The sequence spans 191 residues: Probable ribosome biogenesis protein RLP24 (191 aa).

Residue S136 is modified to Phosphoserine.

It belongs to the eukaryotic ribosomal protein eL24 family. Associated with nucleolar and cytoplasmic pre-60S particles. At the end of biogenesis it dissociates from cytoplasmic pre-60S particles and is likely to be exchanged for its ribosomal homologue, RPL24.

The protein resides in the nucleus. It is found in the nucleolus. Its function is as follows. Involved in the biogenesis of the 60S ribosomal subunit. Ensures the docking of NOG1 to pre-60S particles. This is Probable ribosome biogenesis protein RLP24 (RpL24-like) from Drosophila melanogaster (Fruit fly).